The chain runs to 300 residues: N-acetylmuramic acid 6-phosphate etherase (300 aa).

The SIS domain maps to Val-57–Lys-220. Catalysis depends on Glu-85, which acts as the Proton donor. The active site involves Glu-116.

This sequence belongs to the GCKR-like family. MurNAc-6-P etherase subfamily. As to quaternary structure, homodimer.

It carries out the reaction N-acetyl-D-muramate 6-phosphate + H2O = N-acetyl-D-glucosamine 6-phosphate + (R)-lactate. The protein operates within amino-sugar metabolism; N-acetylmuramate degradation. It participates in amino-sugar metabolism; 1,6-anhydro-N-acetylmuramate degradation. It functions in the pathway cell wall biogenesis; peptidoglycan recycling. Specifically catalyzes the cleavage of the D-lactyl ether substituent of MurNAc 6-phosphate, producing GlcNAc 6-phosphate and D-lactate. Together with AnmK, is also required for the utilization of anhydro-N-acetylmuramic acid (anhMurNAc) either imported from the medium or derived from its own cell wall murein, and thus plays a role in cell wall recycling. The sequence is that of N-acetylmuramic acid 6-phosphate etherase from Edwardsiella ictaluri (strain 93-146).